A 296-amino-acid chain; its full sequence is MYQRLLKSLNHLNPRAWDFVQLTRMDKPIGIYLLLWPTLWALWIAGKGSPSLINIVIFVLGVVLTRAGGCVINDWADRKVDGHVKRTEQRPLVSGKISSKEALVFFAVLMGISFLLVLLTNATTILLSLGGLALAASYPFMKRYTYYPQVVLGAAFSWGMPMAFTAETGDLPATAWLLYIANLLWTVGYDTYYAMTDRDDDLKIGVKSTAILFGDADRVIILTLQGLSLVCLLLAGARFELGGWFHLGLLAAAGCFAWEFWYTRDKDRMKCFKAFLHNHWAGLAIFVGIVADYAFR.

Transmembrane regions (helical) follow at residues 28–48 (PIGIYLLLWPTLWALWIAGKG), 52–72 (LINIVIFVLGVVLTRAGGCVI), 102–122 (ALVFFAVLMGISFLLVLLTNA), 146–166 (YYPQVVLGAAFSWGMPMAFTA), 169–189 (GDLPATAWLLYIANLLWTVGY), 219–239 (VIILTLQGLSLVCLLLAGARF), 241–261 (LGGWFHLGLLAAAGCFAWEFW), and 275–295 (FLHNHWAGLAIFVGIVADYAF).

It belongs to the UbiA prenyltransferase family. Requires Mg(2+) as cofactor.

The protein resides in the cell inner membrane. The enzyme catalyses all-trans-octaprenyl diphosphate + 4-hydroxybenzoate = 4-hydroxy-3-(all-trans-octaprenyl)benzoate + diphosphate. Its pathway is cofactor biosynthesis; ubiquinone biosynthesis. Functionally, catalyzes the prenylation of para-hydroxybenzoate (PHB) with an all-trans polyprenyl group. Mediates the second step in the final reaction sequence of ubiquinone-8 (UQ-8) biosynthesis, which is the condensation of the polyisoprenoid side chain with PHB, generating the first membrane-bound Q intermediate 3-octaprenyl-4-hydroxybenzoate. In Pseudomonas fluorescens (strain SBW25), this protein is 4-hydroxybenzoate octaprenyltransferase.